The primary structure comprises 430 residues: Ethylene-responsive transcription factor WRI1 (430 aa).

Over residues 1–26 (MKKRLTTSTCSSSPSSSVSSSTTTSS) the composition is skewed to low complexity. A disordered region spans residues 1 to 66 (MKKRLTTSTC…PASTRRSSIY (66 aa)). Over residues 53–63 (NPTSPASTRRS) the composition is skewed to polar residues. Residues 65–131 (IYRGVTRHRW…WGPDTILNFP (67 aa)) constitute a DNA-binding region (AP2/ERF 1). Threonine 70 is modified (phosphothreonine; by KIN10). Serine 166 bears the Phosphoserine; by KIN10 mark. Positions 167-225 (KYRGVARHHHNGRWEARIGRVFGNKYLYLGTYNTQEEAAAAYDMAAIEYRGANAVTNFD) form a DNA-binding region, AP2/ERF 2. Positions 260 to 274 (VETREAKEEPREEVK) are enriched in basic and acidic residues. Disordered stretches follow at residues 260-297 (VETR…EQQE) and 398-422 (SPPS…TTTT).

Belongs to the AP2/ERF transcription factor family. AP2 subfamily. As to quaternary structure, interacts with KIN10 and KIN11. In terms of processing, ubiquitinated. The phosphorylation at Thr-70 and Ser-166 by KIN10 facilitates its degradation via the proteasomal pathway. In terms of tissue distribution, mostly expressed in siliques, especially in seeds. Also detected in roots and flowers, and, to a lower extent, in leaves stems and seedlings.

Its subcellular location is the nucleus. Its activity is regulated as follows. Down-regulated by KIN10 that controls its protein stability under a phosphorylation-dependent manner. Functionally, may be involved in the regulation of gene expression by stress factors and by components of stress signal transduction pathways. Transcriptional activator involved in the activation of a subset of sugar-responsive genes and the control of carbon flow from sucrose import to oil accumulation in developing seeds. Binds to the GCC-box pathogenesis-related promoter element. Promotes sugar uptake and seed oil accumulation by glycolysis. Required for embryo development, seed germination and, indirectly, for seedling establishment. Negative regulator of the ABA-mediated germination inhibition. The chain is Ethylene-responsive transcription factor WRI1 (WRI1) from Arabidopsis thaliana (Mouse-ear cress).